The chain runs to 281 residues: Probable thioesterase gloN (281 aa).

A disordered region spans residues 207-233 (LDDGSNNSRDLNETSPTETSNDSETQA). A compositionally biased stretch (polar residues) spans 210–232 (GSNNSRDLNETSPTETSNDSETQ).

This sequence belongs to the AMT4 thioesterase family.

It functions in the pathway mycotoxin biosynthesis. In terms of biological role, probable thioesterase; part of the gene cluster that mediates the biosynthesis of pneumocandins, lipohexapeptides of the echinocandin family that prevent fungal cell wall formation by non-competitive inhibition of beta-1,3-glucan synthase. The 10,12-dimethylmyristoyl side chain is synthesized by the reducing polyketide synthase gloL/GLPKS4. The thioesterase gloN/GLHYD exclusively interacts with gloL/GLPKS4 to maintain turnover of the polyketide side chain. The 10R,12S-dimethylmyristic acid is then transferred to the first thiolation domain of the nonribosomal peptide synthetase gloA/GLNRPS4 by the acyl-AMP ligase gloD/GLligase, followed by its acylation to L-ornithine to trigger elongation of the cyclic hexapeptide. L-ornithine, 4R-hydroxyl-L-proline (generated from L-proline by the dioxygenase gloF/GLOXY2), 3S-hydroxyl-L-homotyrosine (generated by gloG/GLHtyB, gloH/GLHtyA, gloI/GLHtyC, gloJ/GLHtyD and hydroxylated at C-3 by the dioxygenase gloM/GLOXY1), 3R-hydroxyl-L-glutamine (generated from L-glutamine probably by the dioxygenase gloE/GLOXY3) and 3S-hydroxyl-L-proline (generated from L-proline by the dioxygenase gloF/GLOXY2 to yield pneumocandin B0), or 3S-hydroxyl-4S-methyl-L-proline (generated from L-leucine by the dioxygenase gloC/GLOXY4 to yield pneumocandin A0) are sequentially added to the growing chain. The last C domain of gloA/GLNRPS4 is proposed to be responsible for cyclization by condensation to form the peptide bond between L-ornithine and 3S-hydroxyl-4S-methyl-L-proline (for pneumocandin A0) or 3S-hydroxyl-L-proline (for pneumocandin B0). Finally, the subsequent C-4 hydroxylation of 3S-hydroxyl-L-homotyrosine and L-ornithine dihydroxylation at C-4 and C-5 are performed by the cytochrome P450 monooxygenases gloP/GLP450-1 and gloO/GLP450-2, respectively. The polypeptide is Probable thioesterase gloN (Glarea lozoyensis (strain ATCC 20868 / MF5171)).